The sequence spans 602 residues: Elongation factor 4 (602 aa).

The tr-type G domain maps to 7–189 (KFIRNFSIIA…QLVVAIPPPV (183 aa)). GTP is bound by residues 19-24 (DHGKST) and 136-139 (NKID).

It belongs to the TRAFAC class translation factor GTPase superfamily. Classic translation factor GTPase family. LepA subfamily.

Its subcellular location is the cell inner membrane. The catalysed reaction is GTP + H2O = GDP + phosphate + H(+). Its function is as follows. Required for accurate and efficient protein synthesis under certain stress conditions. May act as a fidelity factor of the translation reaction, by catalyzing a one-codon backward translocation of tRNAs on improperly translocated ribosomes. Back-translocation proceeds from a post-translocation (POST) complex to a pre-translocation (PRE) complex, thus giving elongation factor G a second chance to translocate the tRNAs correctly. Binds to ribosomes in a GTP-dependent manner. The sequence is that of Elongation factor 4 from Coxiella burnetii (strain Dugway 5J108-111).